Reading from the N-terminus, the 120-residue chain is MATKSLSETALVAVIGDEDVVTGFLLAGVGQKDKKKNENFLVVDSKTSQAKIETAFKSFTTRNDIAIIMITQKVADEIRYLIDEYHQVIPTILEIPSKDHPYDPKKDSVMLKVKKMTGSD.

It belongs to the V-ATPase F subunit family. V-ATPase is a heteromultimeric enzyme composed of a peripheral catalytic V1 complex (components A to H) attached to an integral membrane V0 proton pore complex (components: a, c, c', c'' and d).

Subunit of the peripheral V1 complex of vacuolar ATPase essential for assembly or catalytic function. V-ATPase is responsible for acidifying a variety of intracellular compartments in eukaryotic cells. This is V-type proton ATPase subunit F (vatF) from Dictyostelium discoideum (Social amoeba).